The primary structure comprises 338 residues: Auxin-responsive protein IAA9 (338 aa).

The disordered stretch occupies residues 1 to 25; that stretch reads MSPEEELQSNVSVASSSPTSNCISR. The segment covering 9–21 has biased composition (low complexity); that stretch reads SNVSVASSSPTSN. An EAR-like (transcriptional repression) motif is present at residues 68 to 72; it reads LTLGL. Residues 150–186 are disordered; it reads ATQSVTKKDVPQNIPKGQSSTTNNSSSPPAAKAQIVG. The segment covering 168 to 180 has biased composition (low complexity); sequence SSTTNNSSSPPAA. A PB1 domain is found at 216 to 318; it reads ALFVKVSMDG…VCKKLKIMKG (103 aa).

It belongs to the Aux/IAA family. In terms of assembly, homodimers and heterodimers. Interacts with TPL. In terms of processing, phosphorylated by phytochrome A in vitro. In terms of tissue distribution, highly expressed in the whole plant.

It localises to the nucleus. In terms of biological role, aux/IAA proteins are short-lived transcriptional factors that function as repressors of early auxin response genes at low auxin concentrations. Repression is thought to result from the interaction with auxin response factors (ARFs), proteins that bind to the auxin-responsive promoter element (AuxRE). Formation of heterodimers with ARF proteins may alter their ability to modulate early auxin response genes expression. In Arabidopsis thaliana (Mouse-ear cress), this protein is Auxin-responsive protein IAA9 (IAA9).